The primary structure comprises 1083 residues: Integrator complex subunit 3 homolog (1083 aa).

Disordered regions lie at residues 551–579, 929–953, and 1014–1083; these read NEAV…DLPL, YPSS…TPSA, and AVGR…NDSD. Residues 942–953 are compositionally biased toward low complexity; the sequence is KGSSAASSTPSA. Residues S1053, S1054, S1058, and S1059 each carry the phosphoserine modification. Positions 1066–1077 are enriched in basic residues; it reads HKVTQPAKKRKK.

It belongs to the Integrator subunit 3 family. In terms of assembly, belongs to the multiprotein complex Integrator, at least composed of IntS1, IntS2, IntS3, IntS4, omd/IntS5, IntS6, defl/IntS7, IntS8, IntS9, IntS10, IntS11, IntS12, asun/IntS13, IntS14 and IntS15. The core complex associates with protein phosphatase 2A subunits mts/PP2A and Pp2A-29B, to form the Integrator-PP2A (INTAC) complex.

The protein localises to the nucleus. It is found in the cytoplasm. Component of the integrator complex, a multiprotein complex that terminates RNA polymerase II (Pol II) transcription in the promoter-proximal region of genes. The integrator complex provides a quality checkpoint during transcription elongation by driving premature transcription termination of transcripts that are unfavorably configured for transcriptional elongation: the complex terminates transcription by (1) catalyzing dephosphorylation of the C-terminal domain (CTD) of Pol II subunit Polr2A/Rbp1 and Spt5, and (2) degrading the exiting nascent RNA transcript via endonuclease activity. The integrator complex is also involved in the 3'-end processing of the U7 snRNA, and also the spliceosomal snRNAs U1, U2, U4 and U5. The sequence is that of Integrator complex subunit 3 homolog (IntS3) from Drosophila grimshawi (Hawaiian fruit fly).